A 206-amino-acid polypeptide reads, in one-letter code: High frequency lysogenization protein HflD homolog (206 aa).

This sequence belongs to the HflD family.

It is found in the cytoplasm. The protein resides in the cell inner membrane. In Idiomarina loihiensis (strain ATCC BAA-735 / DSM 15497 / L2-TR), this protein is High frequency lysogenization protein HflD homolog.